Consider the following 337-residue polypeptide: DNA-directed RNA polymerase subunit alpha (337 aa).

Residues 1–233 (MVREKVTVST…DLFIPFLHME (233 aa)) form an alpha N-terminal domain (alpha-NTD) region. The segment at 264–337 (NKKIALKSIF…FVIDLAKNKF (74 aa)) is alpha C-terminal domain (alpha-CTD).

The protein belongs to the RNA polymerase alpha chain family. In terms of assembly, in plastids the minimal PEP RNA polymerase catalytic core is composed of four subunits: alpha, beta, beta', and beta''. When a (nuclear-encoded) sigma factor is associated with the core the holoenzyme is formed, which can initiate transcription.

The protein resides in the plastid. It is found in the chloroplast. It carries out the reaction RNA(n) + a ribonucleoside 5'-triphosphate = RNA(n+1) + diphosphate. Its function is as follows. DNA-dependent RNA polymerase catalyzes the transcription of DNA into RNA using the four ribonucleoside triphosphates as substrates. This is DNA-directed RNA polymerase subunit alpha from Atropa belladonna (Belladonna).